The primary structure comprises 376 residues: Thymidine kinase (376 aa).

The interval 1-44 (MASYPGHQHASAFDQAARSRGHSNRRTALRPRRQQEATEVRPEQ) is disordered. The segment covering 19-32 (SRGHSNRRTALRPR) has biased composition (basic residues). The segment covering 33–44 (RQQEATEVRPEQ) has biased composition (basic and acidic residues). Residue 56 to 63 (GPHGMGKT) participates in ATP binding. The active-site Proton acceptor is Glu83. Residues Tyr101 and Gln125 each coordinate substrate. Residue Arg216 participates in ATP binding. Substrate is bound at residue Arg222. A disordered region spans residues 260–280 (GQLSGTAVPPQGAEPQSNAGP).

This sequence belongs to the herpesviridae thymidine kinase family. As to quaternary structure, homodimer.

It catalyses the reaction thymidine + ATP = dTMP + ADP + H(+). In terms of biological role, catalyzes the transfer of the gamma-phospho group of ATP to thymidine to generate dTMP in the salvage pathway of pyrimidine synthesis. The dTMP serves as a substrate for DNA polymerase during viral DNA replication. Allows the virus to be reactivated and to grow in non-proliferative cells lacking a high concentration of phosphorylated nucleic acid precursors. The sequence is that of Thymidine kinase from Human herpesvirus 1 (strain HFEM) (HHV-1).